The primary structure comprises 348 residues: Probable dual-specificity RNA methyltransferase RlmN (348 aa).

Glu-93 serves as the catalytic Proton acceptor. Residues 99-333 (TEKRLTACLS…VSLRKSRGSD (235 aa)) enclose the Radical SAM core domain. Cys-106 and Cys-338 are disulfide-bonded. The [4Fe-4S] cluster site is built by Cys-113, Cys-117, and Cys-120. Residues 160-161 (GE), Ser-190, 219-221 (SLH), and Asn-295 each bind S-adenosyl-L-methionine. The active-site S-methylcysteine intermediate is the Cys-338.

This sequence belongs to the radical SAM superfamily. RlmN family. It depends on [4Fe-4S] cluster as a cofactor.

The protein localises to the cytoplasm. It catalyses the reaction adenosine(2503) in 23S rRNA + 2 reduced [2Fe-2S]-[ferredoxin] + 2 S-adenosyl-L-methionine = 2-methyladenosine(2503) in 23S rRNA + 5'-deoxyadenosine + L-methionine + 2 oxidized [2Fe-2S]-[ferredoxin] + S-adenosyl-L-homocysteine. The catalysed reaction is adenosine(37) in tRNA + 2 reduced [2Fe-2S]-[ferredoxin] + 2 S-adenosyl-L-methionine = 2-methyladenosine(37) in tRNA + 5'-deoxyadenosine + L-methionine + 2 oxidized [2Fe-2S]-[ferredoxin] + S-adenosyl-L-homocysteine. Its function is as follows. Specifically methylates position 2 of adenine 2503 in 23S rRNA and position 2 of adenine 37 in tRNAs. This chain is Probable dual-specificity RNA methyltransferase RlmN, found in Prochlorococcus marinus (strain MIT 9515).